The primary structure comprises 392 residues: ER-bound oxygenase mpaB (392 aa).

Topologically, residues 1-21 (MSLPLPPALSELARALPYSRT) are lumenal. A helical membrane pass occupies residues 22–41 (QWLPIFVGFLIGYPILIRAL). Residues 42 to 392 (RYKRHGEMKK…WSKYHATTND (351 aa)) are Cytoplasmic-facing. Residues 352–376 (DLGQKKGPQGDPGNDEGIKDLKDGE) form a disordered region. Over residues 367–376 (EGIKDLKDGE) the composition is skewed to basic and acidic residues.

The protein belongs to the mpaB oxygenase family.

It is found in the endoplasmic reticulum membrane. It catalyses the reaction 4-farnesyl-3,5-dihydroxy-6-methylphthalide + AH2 + 2 O2 = (4E,8E)-10-(4,6-dihydroxy-7-methyl-3-oxo-1,3-dihydro-2-benzofuran-5-yl)-4,8-dimethyldeca-4,8-dienoate + acetone + A + H2O + H(+). Its pathway is secondary metabolite biosynthesis; terpenoid biosynthesis. ER-bound oxygenase; part of the gene cluster that mediates the biosynthesis of mycophenolic acid (MPA), the first isolated antibiotic natural product in the world obtained from a culture of Penicillium brevicompactum in 1893. MpaB catalyzes the oxidative cleavage the C19-C20 double bond in farnesyl-DHMP (FDHMP) to yield FDHMP-3C via a mycophenolic aldehyde intermediate. The first step of the pathway is the synthesis of 5-methylorsellinic acid (5MOA) by the cytosolic polyketide synthase mpaC. 5MOA is then converted to the phthalide compound 5,7-dihydroxy-4,6-dimethylphthalide (DHMP) by the endoplasmic reticulum-bound cytochrome P450 monooxygenase mpaDE. MpaDE first catalyzes hydroxylation of 5-MOA to 4,6-dihydroxy-2-(hydroxymethyl)-3-methylbenzoic acid (DHMB). MpaDE then acts as a lactone synthase that catalyzes the ring closure to convert DHMB into DHMP. The next step is the prenylation of DHMP by the Golgi apparatus-associated prenyltransferase mpaA to yield farnesyl-DHMP (FDHMP). The ER-bound oxygenase mpaB then mediates the oxidative cleavage the C19-C20 double bond in FDHMP to yield FDHMP-3C via a mycophenolic aldehyde intermediate. The O-methyltransferase mpaG catalyzes the methylation of FDHMP-3C to yield MFDHMP-3C. After the cytosolic methylation of FDHMP-3C, MFDHMP-3C enters into peroxisomes probably via free diffusion due to its low molecular weight. Upon a peroxisomal CoA ligation reaction, catalyzed by a beta-oxidation component enzyme acyl-CoA ligase ACL891, MFDHMP-3C-CoA would then be restricted to peroxisomes for the following beta-oxidation pathway steps. The peroxisomal beta-oxidation machinery than converts MFDHMP-3C-CoA into MPA_CoA, via a beta-oxidation chain-shortening process. Finally mpaH acts as a peroxisomal acyl-CoA hydrolase with high substrate specificity toward MPA-CoA to release the final product MPA. The sequence is that of ER-bound oxygenase mpaB from Penicillium brevicompactum.